A 371-amino-acid polypeptide reads, in one-letter code: tRNA 2-selenouridine synthase (371 aa).

Residues 14–137 enclose the Rhodanese domain; the sequence is FLDDVPLIDL…MRRFLIDTLD (124 aa). Cys-97 acts as the S-selanylcysteine intermediate in catalysis.

It belongs to the SelU family. In terms of assembly, monomer.

The enzyme catalyses 5-methylaminomethyl-2-thiouridine(34) in tRNA + selenophosphate + (2E)-geranyl diphosphate + H2O + H(+) = 5-methylaminomethyl-2-selenouridine(34) in tRNA + (2E)-thiogeraniol + phosphate + diphosphate. It carries out the reaction 5-methylaminomethyl-2-thiouridine(34) in tRNA + (2E)-geranyl diphosphate = 5-methylaminomethyl-S-(2E)-geranyl-thiouridine(34) in tRNA + diphosphate. The catalysed reaction is 5-methylaminomethyl-S-(2E)-geranyl-thiouridine(34) in tRNA + selenophosphate + H(+) = 5-methylaminomethyl-2-(Se-phospho)selenouridine(34) in tRNA + (2E)-thiogeraniol. It catalyses the reaction 5-methylaminomethyl-2-(Se-phospho)selenouridine(34) in tRNA + H2O = 5-methylaminomethyl-2-selenouridine(34) in tRNA + phosphate. In terms of biological role, involved in the post-transcriptional modification of the uridine at the wobble position (U34) of tRNA(Lys), tRNA(Glu) and tRNA(Gln). Catalyzes the conversion of 2-thiouridine (S2U-RNA) to 2-selenouridine (Se2U-RNA). Acts in a two-step process involving geranylation of 2-thiouridine (S2U) to S-geranyl-2-thiouridine (geS2U) and subsequent selenation of the latter derivative to 2-selenouridine (Se2U) in the tRNA chain. The chain is tRNA 2-selenouridine synthase from Aeromonas salmonicida (strain A449).